The following is a 187-amino-acid chain: Ion-translocating oxidoreductase complex subunit B (187 aa).

The tract at residues 1–23 is hydrophobic; that stretch reads MIAAAASMSALGLGLGYLLGAAA. Residues 29 to 88 enclose the 4Fe-4S domain; it reads ETPPIVEEIAKILPGTNCGACGFPGCNGLAEAMAEGNAPVTACTPGGRDVALALAEIVTV. The [4Fe-4S] cluster site is built by C46, C49, C54, C71, C112, C115, C118, C122, C142, C145, C148, and C152. 4Fe-4S ferredoxin-type domains lie at 103–132 and 133–162; these read MVAFVFEDHCTGCQKCFKRCPTDAIVGGAK and QIHTVVMDACIGCDACIEVCPTEAIVSRVK.

It belongs to the 4Fe4S bacterial-type ferredoxin family. RnfB subfamily. In terms of assembly, the complex is composed of six subunits: RnfA, RnfB, RnfC, RnfD, RnfE and RnfG. [4Fe-4S] cluster serves as cofactor.

The protein localises to the cellular chromatophore membrane. In terms of biological role, part of a membrane-bound complex that couples electron transfer with translocation of ions across the membrane. Required for nitrogen fixation. Involved in electron transfer to nitrogenase. This is Ion-translocating oxidoreductase complex subunit B from Rhodobacter capsulatus (Rhodopseudomonas capsulata).